The sequence spans 184 residues: Exosome complex protein LRP1 (184 aa).

The tract at residues 157 to 184 is disordered; sequence DSTDHIRKASSKKSKRLDKVGKKKGGKK. Over residues 164–184 the composition is skewed to basic residues; the sequence is KASSKKSKRLDKVGKKKGGKK.

Belongs to the C1D family. As to quaternary structure, associates with nuclear form of the RNA exosome complex. Interacts with RRP4, RRP6, RRP45 and RRP46.

The protein localises to the nucleus. Required for exosome-dependent processing of pre-rRNA and small nucleolar RNA (snRNA) precursors. Involved in processing of 35S pre-rRNA at the A0, A1 and A2 sites. Required for activity of RRP6 in 7S pre-rRNA processing. Also has a role in 3'-processing of U4 and U5 small nuclear RNAs (snRNAs). Acts as a mRNA export factor. Mediates mRNA degradation upon UV irradiation. Maintains genome integrity where it is involved in both non-homologous end joining (NHEJ) and homologous recombination pathway repair of double strand DNA breaks. During NHEJ, required for joining 3'-overhanging ends. Also involved in telomere length regulation and maintenance. This Saccharomyces cerevisiae (strain ATCC 204508 / S288c) (Baker's yeast) protein is Exosome complex protein LRP1 (LRP1).